A 341-amino-acid chain; its full sequence is MHRTYSLRNQRAPTAAELQAPPPPPSSTKSKFFGKASIASSFRKNAAGNFGPELARKLSQLVKTEKGVLRAMEVVASERREAAKQLSLWGADNDDDVSDVTDKLGVLIYELGELQDQFIDKYDQYRVTLKSIRNIEASVQPSRDRKEKITDEIAHLKYKDPQSTKIPVLEQELVRAEAESLVAEAQLSNITREKLKAAYSYMFDSLRELSEKFALIAGYGKALLELLDDSPVTPGEARPAYDGYEASRQIIMDAESALESWTLDMAAVKPTLSFHQTVDDVYEDEDGEEEEEPEIQNGDIPGQVVEEEEVEWTTEVPVDDEAHEADHHVSQNGHTSGSENI.

Positions 1-11 (MHRTYSLRNQR) are enriched in polar residues. Residues 1–32 (MHRTYSLRNQRAPTAAELQAPPPPPSSTKSKF) form a disordered region. Residue Thr233 is modified to Phosphothreonine. Acidic residues-rich tracts occupy residues 282–294 (YEDE…EEPE) and 305–323 (VEEE…DEAH). The tract at residues 282–341 (YEDEDGEEEEEPEIQNGDIPGQVVEEEEVEWTTEVPVDDEAHEADHHVSQNGHTSGSENI) is disordered. The span at 330–341 (SQNGHTSGSENI) shows a compositional bias: polar residues.

Post-translationally, phosphorylated by PKH1 and PKH2. Phosphorylation is stimulated by sphingolipid long chain bases (LCBs). N-glycosylated.

Its subcellular location is the cytoplasm. The protein localises to the cell cortex. Together with PIL1, main component of eisosomes, structures at the cell periphery underneath the plasma membrane that mark the site of endocytosis. Negative regulator of cell wall integrity (CWI) in unstressed cells, probably by inhibiting protein kinase PKH1/PHK2 activity and regulating their downstream CWI pathways PKC1-MAP kinase pathway and protein kinase YPK1 pathway. Activity may be regulated by the transient increase of sphingolipid long chain bases (LCBs) during heat stress. The sequence is that of Sphingolipid long chain base-responsive protein LSP1 (LSP1) from Saccharomyces cerevisiae (strain ATCC 204508 / S288c) (Baker's yeast).